The primary structure comprises 138 residues: Small ribosomal subunit protein bS6 (138 aa).

Residues 94 to 138 are disordered; the sequence is VKQDGPLPTPKPTSKEDETEKEEVKPTEDKTESPAQEEKKEDSKE. Over residues 106 to 138 the composition is skewed to basic and acidic residues; sequence TSKEDETEKEEVKPTEDKTESPAQEEKKEDSKE.

The protein belongs to the bacterial ribosomal protein bS6 family.

Binds together with bS18 to 16S ribosomal RNA. The polypeptide is Small ribosomal subunit protein bS6 (Prochlorococcus marinus (strain NATL1A)).